The sequence spans 294 residues: Elongation factor Ts (294 aa).

Positions 79-82 (TDFV) are involved in Mg(2+) ion dislocation from EF-Tu.

It belongs to the EF-Ts family.

The protein localises to the cytoplasm. Associates with the EF-Tu.GDP complex and induces the exchange of GDP to GTP. It remains bound to the aminoacyl-tRNA.EF-Tu.GTP complex up to the GTP hydrolysis stage on the ribosome. This is Elongation factor Ts from Geobacillus thermodenitrificans (strain NG80-2).